The chain runs to 431 residues: Glycolipid 2-alpha-mannosyltransferase 1 (431 aa).

Residues 1–9 (MASTRSNAR) are Cytoplasmic-facing. Residues 10 to 28 (LIRFGIFALVLIGCGYILT) form a helical; Signal-anchor for type II membrane protein membrane-spanning segment. Topologically, residues 29-431 (RGSSFQPPNY…RQKGWEKYTA (403 aa)) are lumenal. The span at 35 to 44 (PPNYQQTQSP) shows a compositional bias: polar residues. The segment at 35–73 (PPNYQQTQSPAAHEKQTGNVAAGGGAGSGSAGAQVPLGK) is disordered. Gly residues predominate over residues 55–64 (AAGGGAGSGS). Glu318 acts as the Nucleophile in catalysis.

Belongs to the glycosyltransferase 15 family.

Its subcellular location is the golgi apparatus membrane. It participates in protein modification; protein glycosylation. In terms of biological role, involved in O-glycosylation of cell wall and secreted proteins. Transfers an alpha-D-mannosyl residue from GDP-mannose into lipid-linked oligosaccharide, forming an alpha-(1-&gt;2)-D-mannosyl-D-mannose linkage. Mainly responsible for the addition of the second mannose residue in an O-linked mannose pentamer. Can also substitute for MNT2 by adding the third mannose residue. Important for adherence to host surfaces and for virulence. In Candida albicans (strain SC5314 / ATCC MYA-2876) (Yeast), this protein is Glycolipid 2-alpha-mannosyltransferase 1 (MNT1).